Here is an 840-residue protein sequence, read N- to C-terminus: Heat shock 70 kDa protein 4 (840 aa).

N6-acetyllysine is present on Lys-53. Position 76 is a phosphoserine (Ser-76). 2 positions are modified to phosphotyrosine: Tyr-89 and Tyr-336. Residues Ser-393 and Ser-415 each carry the phosphoserine modification. N6-acetyllysine is present on Lys-430. Positions 500–575 (VHKSEENEEP…QAKKAKVKTS (76 aa)) are disordered. A compositionally biased stretch (basic and acidic residues) spans 514-533 (QNAKEEEKMQVDQEEPHVEE). Thr-538 carries the phosphothreonine modification. 2 positions are modified to phosphoserine: Ser-546 and Ser-647. Tyr-660 bears the Phosphotyrosine mark. N6-acetyllysine is present on Lys-679. Ser-756 carries the phosphoserine modification. Lys-773 bears the N6-methyllysine mark. The tract at residues 779–840 (CSPIISKPKP…DKKLPEMDID (62 aa)) is disordered. Composition is skewed to basic and acidic residues over residues 788–799 (PKVEPPKEEQKN) and 829–840 (DSDKKLPEMDID).

This sequence belongs to the heat shock protein 70 family. Interacts with TJP1/ZO-1.

The protein localises to the cytoplasm. This is Heat shock 70 kDa protein 4 (HSPA4) from Homo sapiens (Human).